We begin with the raw amino-acid sequence, 539 residues long: Phosphoenolpyruvate carboxykinase (ATP) (539 aa).

Substrate contacts are provided by arginine 59, tyrosine 200, and lysine 206. ATP is bound by residues lysine 206, histidine 225, and 242 to 250 (GLSGTGKTT). Lysine 206 and histidine 225 together coordinate Mn(2+). Aspartate 263 serves as a coordination point for Mn(2+). Residues glutamate 291, arginine 327, 447–448 (RI), and threonine 453 contribute to the ATP site. Arginine 327 lines the substrate pocket.

It belongs to the phosphoenolpyruvate carboxykinase (ATP) family. It depends on Mn(2+) as a cofactor.

Its subcellular location is the cytoplasm. The catalysed reaction is oxaloacetate + ATP = phosphoenolpyruvate + ADP + CO2. It participates in carbohydrate biosynthesis; gluconeogenesis. Involved in the gluconeogenesis. Catalyzes the conversion of oxaloacetate (OAA) to phosphoenolpyruvate (PEP) through direct phosphoryl transfer between the nucleoside triphosphate and OAA. In Selenomonas ruminantium, this protein is Phosphoenolpyruvate carboxykinase (ATP).